Consider the following 335-residue polypeptide: Holliday junction branch migration complex subunit RuvB (335 aa).

Residues 1 to 181 (MDRIVEIEKY…FGMQFRLEFY (181 aa)) form a large ATPase domain (RuvB-L) region. Residue L20 participates in ATP binding. Residues R21, Y28, I29, G62, L63, G64, K65, T66, and T67 each contribute to the ADP site. Residues 128–130 (EDY) and R171 each bind ATP. Residues Y181 and R218 each contribute to the ADP site. Residues 182–252 (KDSELALILQ…RANEALNSLG (71 aa)) are small ATPAse domain (RuvB-S). A head domain (RuvB-H) region spans residues 255–335 (ELGFDAMDLR…LNYEKTLFEE (81 aa)). Positions 309 and 314 each coordinate DNA.

The protein belongs to the RuvB family. Homohexamer. Forms an RuvA(8)-RuvB(12)-Holliday junction (HJ) complex. HJ DNA is sandwiched between 2 RuvA tetramers; dsDNA enters through RuvA and exits via RuvB. An RuvB hexamer assembles on each DNA strand where it exits the tetramer. Each RuvB hexamer is contacted by two RuvA subunits (via domain III) on 2 adjacent RuvB subunits; this complex drives branch migration. In the full resolvosome a probable DNA-RuvA(4)-RuvB(12)-RuvC(2) complex forms which resolves the HJ.

Its subcellular location is the cytoplasm. It carries out the reaction ATP + H2O = ADP + phosphate + H(+). In terms of biological role, the RuvA-RuvB-RuvC complex processes Holliday junction (HJ) DNA during genetic recombination and DNA repair, while the RuvA-RuvB complex plays an important role in the rescue of blocked DNA replication forks via replication fork reversal (RFR). RuvA specifically binds to HJ cruciform DNA, conferring on it an open structure. The RuvB hexamer acts as an ATP-dependent pump, pulling dsDNA into and through the RuvAB complex. RuvB forms 2 homohexamers on either side of HJ DNA bound by 1 or 2 RuvA tetramers; 4 subunits per hexamer contact DNA at a time. Coordinated motions by a converter formed by DNA-disengaged RuvB subunits stimulates ATP hydrolysis and nucleotide exchange. Immobilization of the converter enables RuvB to convert the ATP-contained energy into a lever motion, pulling 2 nucleotides of DNA out of the RuvA tetramer per ATP hydrolyzed, thus driving DNA branch migration. The RuvB motors rotate together with the DNA substrate, which together with the progressing nucleotide cycle form the mechanistic basis for DNA recombination by continuous HJ branch migration. Branch migration allows RuvC to scan DNA until it finds its consensus sequence, where it cleaves and resolves cruciform DNA. This Campylobacter jejuni subsp. jejuni serotype O:2 (strain ATCC 700819 / NCTC 11168) protein is Holliday junction branch migration complex subunit RuvB.